Consider the following 424-residue polypeptide: Omega-6 fatty acid desaturase, chloroplastic (424 aa).

A chloroplast-targeting transit peptide spans 1 to 63 (MACTLADSLL…TRNKVTVIHA (63 aa)). Valine 64 is subject to N-acetylvaline. The Histidine box-1 motif lies at 165–169 (HDCAH). A Histidine box-2 motif is present at residues 201 to 205 (HDRHH). The Histidine box-3 signature appears at 361 to 365 (HIPHH).

Belongs to the fatty acid desaturase type 1 family.

The protein resides in the plastid. Its subcellular location is the chloroplast membrane. It carries out the reaction a (9Z)-octadecenoyl-containing glycerolipid + 2 reduced [2Fe-2S]-[ferredoxin] + O2 + 2 H(+) = a (9Z,12Z)-octadecadienoyl-containing glycerolipid + 2 oxidized [2Fe-2S]-[ferredoxin] + 2 H2O. It participates in lipid metabolism; polyunsaturated fatty acid biosynthesis. Functionally, chloroplast omega-6 fatty acid desaturase introduces the second double bond in the biosynthesis of 16:3 and 18:3 fatty acids, important constituents of plant membranes. It is thought to use ferredoxin as an electron donor and to act on fatty acids esterified to galactolipids, sulfolipids and phosphatidylglycerol. The protein is Omega-6 fatty acid desaturase, chloroplastic of Glycine max (Soybean).